Reading from the N-terminus, the 294-residue chain is MLKGALTALITPFNENGSVDEETFCNFIEWQITQGIDGLIPAGTTGESPTLSHEEHKKVIELCVEKVAKRVPVVAGAGSNSTDEAVELAQHAKKAGADAVLVVTPYYNKPNQEGIYSHFATIAKAVSIPIVIYNIPGRSVVDMAVETMKDLCQNFKNIIGVKDSTGNIERVSEQREKCGKDFVQLSGDDQTALGFNAHGGVGCVSVASNVAPKLCAELYAACRSGDYKTALELNDRLMPLNRSIFIEPSPSGIKYAVAKLGFCRDTVRLPLVPLKDTTKEIIDAALQHAGLIKE.

Residue T45 coordinates pyruvate. The active-site Proton donor/acceptor is Y133. Catalysis depends on K162, which acts as the Schiff-base intermediate with substrate. Pyruvate is bound at residue V204.

The protein belongs to the DapA family. As to quaternary structure, homotetramer; dimer of dimers.

It localises to the cytoplasm. It catalyses the reaction L-aspartate 4-semialdehyde + pyruvate = (2S,4S)-4-hydroxy-2,3,4,5-tetrahydrodipicolinate + H2O + H(+). It functions in the pathway amino-acid biosynthesis; L-lysine biosynthesis via DAP pathway; (S)-tetrahydrodipicolinate from L-aspartate: step 3/4. Catalyzes the condensation of (S)-aspartate-beta-semialdehyde [(S)-ASA] and pyruvate to 4-hydroxy-tetrahydrodipicolinate (HTPA). The sequence is that of 4-hydroxy-tetrahydrodipicolinate synthase from Bartonella bacilliformis (strain ATCC 35685 / KC583 / Herrer 020/F12,63).